We begin with the raw amino-acid sequence, 113 residues long: U11-theraphotoxin-Hhn1a (113 aa).

The first 21 residues, 1–21, serve as a signal peptide directing secretion; it reads MNTVRVTFLLVFVLAVSLGQA. Positions 22–74 are excised as a propeptide; that stretch reads DKDENRMEMQEKTEQGKSYLDFAENLLLQKLEELEAKLLEEDSEESRNSRQKR. Residues 61 to 83 form a disordered region; that stretch reads EEDSEESRNSRQKRCIGEGVPCD. Intrachain disulfides connect cysteine 75-cysteine 90, cysteine 82-cysteine 95, and cysteine 89-cysteine 110.

This sequence belongs to the neurotoxin 14 (magi-1) family. 01 (HNTX-16) subfamily. In terms of tissue distribution, expressed by the venom gland.

It localises to the secreted. Its function is as follows. Probable ion channel inhibitor. This Cyriopagopus hainanus (Chinese bird spider) protein is U11-theraphotoxin-Hhn1a.